The sequence spans 175 residues: Interferon gamma (175 aa).

The first 23 residues, 1 to 23 (MNATCCILALLLCLTQAISGCYC), serve as a signal peptide directing secretion. The residue at position 24 (glutamine 24) is a Pyrrolidone carboxylic acid. 2 N-linked (GlcNAc...) asparagine glycosylation sites follow: asparagine 39 and asparagine 106.

Belongs to the type II (or gamma) interferon family. Homodimer. Interacts with IFNGR1 (via extracellular domain); this interaction promotes IFNGR1 dimerization. Released primarily from activated T lymphocytes.

The protein localises to the secreted. Its function is as follows. Type II interferon produced by immune cells such as T-cells and NK cells that plays crucial roles in antimicrobial, antiviral, and antitumor responses by activating effector immune cells and enhancing antigen presentation. Primarily signals through the JAK-STAT pathway after interaction with its receptor IFNGR1 to affect gene regulation. Upon IFNG binding, IFNGR1 intracellular domain opens out to allow association of downstream signaling components JAK2, JAK1 and STAT1, leading to STAT1 activation, nuclear translocation and transcription of IFNG-regulated genes. Many of the induced genes are transcription factors such as IRF1 that are able to further drive regulation of a next wave of transcription. Plays a role in class I antigen presentation pathway by inducing a replacement of catalytic proteasome subunits with immunoproteasome subunits. In turn, increases the quantity, quality, and repertoire of peptides for class I MHC loading. Increases the efficiency of peptide generation also by inducing the expression of activator PA28 that associates with the proteasome and alters its proteolytic cleavage preference. Up-regulates as well MHC II complexes on the cell surface by promoting expression of several key molecules such as cathepsins B/CTSB, H/CTSH, and L/CTSL. Participates in the regulation of hematopoietic stem cells during development and under homeostatic conditions by affecting their development, quiescence, and differentiation. This chain is Interferon gamma (IFNG), found in Peromyscus maniculatus (North American deer mouse).